Reading from the N-terminus, the 153-residue chain is Pro-corazonin (153 aa).

The signal sequence occupies residues 1 to 20 (MLRLLLLPLFLFTLSMACMG). Gln21 carries the post-translational modification Pyrrolidone carboxylic acid. Asn31 is modified (asparagine amide). Residues 64 to 153 (LERCLLQLQH…AVEPNDYGKH (90 aa)) constitute a propeptide that is removed on maturation.

Belongs to the corazonin family. As to expression, expression is restricted to 24 neurons in the larval CNS (8 in the brain and 16 in the ventral nerve cord) and 12-16 neurons in the pars lateralis of the adult brain.

The protein localises to the secreted. In terms of biological role, cardioactive peptide. Corazonin is probably involved in the physiological regulation of the heart beat. Clock (Clk) and cycle (cyc) proteins negatively regulate Crz transcription in a cell-specific manner. The protein is Pro-corazonin (Crz) of Drosophila virilis (Fruit fly).